A 215-amino-acid chain; its full sequence is Adenylate kinase (215 aa).

10-15 (GAGKGT) contacts ATP. Residues 30-59 (STGDMFRKAIKDETDLGKEAKSYMDRGELV) form an NMP region. Residues Thr-31, Arg-36, 57-59 (ELV), 85-88 (GFPR), and Gln-92 each bind AMP. Residues 126-163 (GRRICEKCGTTYHLVFNPPKVDGICDIDGGKLYQREDD) are LID. Arg-127 contributes to the ATP binding site. Residues Cys-130 and Cys-133 each coordinate Zn(2+). 136 to 137 (TY) contacts ATP. Zn(2+) is bound by residues Cys-150 and Asp-153. The AMP site is built by Arg-160 and Arg-171. Residue Lys-199 coordinates ATP.

Belongs to the adenylate kinase family. As to quaternary structure, monomer.

It localises to the cytoplasm. The enzyme catalyses AMP + ATP = 2 ADP. It participates in purine metabolism; AMP biosynthesis via salvage pathway; AMP from ADP: step 1/1. Functionally, catalyzes the reversible transfer of the terminal phosphate group between ATP and AMP. Plays an important role in cellular energy homeostasis and in adenine nucleotide metabolism. This chain is Adenylate kinase, found in Staphylococcus epidermidis (strain ATCC 35984 / DSM 28319 / BCRC 17069 / CCUG 31568 / BM 3577 / RP62A).